The sequence spans 236 residues: Small ribosomal subunit protein uS2c (236 aa).

The protein belongs to the universal ribosomal protein uS2 family.

It localises to the plastid. The protein localises to the chloroplast. The chain is Small ribosomal subunit protein uS2c (rps2) from Piper cenocladum (Ant piper).